The following is a 1463-amino-acid chain: Clustered mitochondria protein homolog (1463 aa).

A disordered region spans residues 1–79 (MAKNKKQNGK…ETEQQQQQQE (79 aa)). A compositionally biased stretch (low complexity) spans 10-22 (KAKTPPVVAAAAG). Residues 374-616 (RAEDTFSSKL…RTFPPDVNFL (243 aa)) enclose the Clu domain. 3 disordered regions span residues 684–753 (AQKT…SEDA), 942–988 (GDGQ…SVPS), and 1387–1463 (QKEA…RRKS). Over residues 692–702 (KQAAIEAAAPA) the composition is skewed to low complexity. The segment covering 703–731 (EGDKTPAKDAKDGKEAGKDANDGKEEGST) has biased composition (basic and acidic residues). Residues 955-964 (GGKKQNKQSK) show a composition bias toward basic residues. The span at 965-980 (RGGGGGGGKGAAGGGR) shows a compositional bias: gly residues. Residues 1438-1456 (AEAASHTAGGAAANTAAPA) show a composition bias toward low complexity.

The protein belongs to the CLU family.

It is found in the cytoplasm. Its function is as follows. mRNA-binding protein involved in proper cytoplasmic distribution of mitochondria. The sequence is that of Clustered mitochondria protein homolog from Anopheles gambiae (African malaria mosquito).